We begin with the raw amino-acid sequence, 788 residues long: Integrin beta-6 (788 aa).

An N-terminal signal peptide occupies residues 1–21 (MGIELLCLFFLCLGRNDHVQG). Positions 22 to 71 (GCAVGGAETCEDCLLIGPQCAWCSQENFTHLSGVGERCDTPANLLAKGCQ) constitute a PSI domain. Residues 22–709 (GCAVGGAETC…KDCPKPPNIP (688 aa)) lie on the Extracellular side of the membrane. Cystine bridges form between Cys23–Cys41, Cys31–Cys454, Cys34–Cys59, Cys44–Cys70, Cys197–Cys204, Cys252–Cys293, Cys394–Cys406, Cys426–Cys452, Cys456–Cys476, Cys467–Cys479, Cys481–Cys490, Cys492–Cys519, Cys502–Cys517, Cys511–Cys522, Cys524–Cys537, Cys539–Cys560, Cys544–Cys558, Cys552–Cys563, and Cys565–Cys574. Residues Asn48 and Asn97 are each glycosylated (N-linked (GlcNAc...) asparagine). The VWFA domain maps to 131-371 (YPVDLYYLMD…QLIISAYEEL (241 aa)). Residues Asp140, Ser142, and Ser144 each contribute to the Mg(2+) site. Positions 144, 147, 148, and 179 each coordinate Ca(2+). Asn235, Asp237, Pro239, and Glu240 together coordinate Ca(2+). Glu240 contacts Mg(2+). The N-linked (GlcNAc...) asparagine glycan is linked to Asn260. Ca(2+) is bound by residues Asp271 and Lys355. N-linked (GlcNAc...) asparagine glycosylation is present at Asn387. Asn418 carries an N-linked (GlcNAc...) asparagine glycan. I-EGF domains follow at residues 456 to 491 (CQKE…HHCE), 492 to 538 (CGED…PYCQ), 539 to 575 (CDNF…EYCN), and 576 to 615 (CTTS…PTCE). N-linked (GlcNAc...) asparagine glycosylation is found at Asn463 and Asn471. Asn541 is a glycosylation site (N-linked (GlcNAc...) asparagine). Asn575 carries an N-linked (GlcNAc...) asparagine glycan. 9 cysteine pairs are disulfide-bonded: Cys576-Cys599, Cys583-Cys597, Cys591-Cys602, Cys604-Cys614, Cys617-Cys620, Cys624-Cys670, Cys630-Cys649, Cys633-Cys645, and Cys678-Cys702. A helical membrane pass occupies residues 710-730 (MIMLGVSLAILLIGVVLLCIW). An interaction with HAX1 region spans residues 731-758 (KLLVSFHDRKEVAKFEAERSKAKWQTGT). Residues 731-788 (KLLVSFHDRKEVAKFEAERSKAKWQTGTNPLYRGSTSTFKNVTYKHKEKQKVDLSTDG) are Cytoplasmic-facing.

Belongs to the integrin beta chain family. As to quaternary structure, heterodimer of an alpha and a beta subunit. Interacts with FLNB. Interacts with HAX1. ITGAV:ITGB6 interacts with FBN1. ITGAV:ITGB6 interacts with TGFB1.

It is found in the cell membrane. Its subcellular location is the cell junction. The protein localises to the focal adhesion. Functionally, integrin alpha-V:beta-6 (ITGAV:ITGB6) is a receptor for fibronectin and cytotactin. It recognizes the sequence R-G-D in its ligands. ITGAV:ITGB6 acts as a receptor for fibrillin-1 (FBN1) and mediates R-G-D-dependent cell adhesion to FBN1. Integrin alpha-V:beta-6 (ITGAV:ITGB6) mediates R-G-D-dependent release of transforming growth factor beta-1 (TGF-beta-1) from regulatory Latency-associated peptide (LAP), thereby playing a key role in TGF-beta-1 activation. This Bos taurus (Bovine) protein is Integrin beta-6 (ITGB6).